Here is a 69-residue protein sequence, read N- to C-terminus: DNA gyrase inhibitor YacG (69 aa).

Positions 7, 10, 26, and 30 each coordinate Zn(2+).

The protein belongs to the DNA gyrase inhibitor YacG family. Interacts with GyrB. Requires Zn(2+) as cofactor.

In terms of biological role, inhibits all the catalytic activities of DNA gyrase by preventing its interaction with DNA. Acts by binding directly to the C-terminal domain of GyrB, which probably disrupts DNA binding by the gyrase. The chain is DNA gyrase inhibitor YacG from Shewanella sp. (strain W3-18-1).